We begin with the raw amino-acid sequence, 160 residues long: Dr hemagglutinin structural subunit (160 aa).

Positions 1–21 are cleaved as a signal peptide; that stretch reads MKKLAIMAAASMVFAVSSAHA. The receptor-binding stretch occupies residues 22–75; the sequence is GFTPSGTTGTTKLTVTEECQVRVGDLTVAKTRGQLTDAAPIGPVTVQALGCDAR.

It belongs to the Dr-adhesin family.

It is found in the fimbrium. Its function is as follows. Hemagglutinins of uropathogenic E.coli mediate adherence to the upper urinary tract. These adhesins bind to the Dr blood group antigen and also agglutinate human erythrocytes in the presence of D-mannose (mannose-resistant hemagglutination (MRHA)). The protein is Dr hemagglutinin structural subunit (draA) of Escherichia coli.